A 62-amino-acid polypeptide reads, in one-letter code: Photosystem II reaction center protein Z (62 aa).

2 helical membrane passes run Ala8–Ala28 and Trp41–Val61.

This sequence belongs to the PsbZ family. As to quaternary structure, PSII is composed of 1 copy each of membrane proteins PsbA, PsbB, PsbC, PsbD, PsbE, PsbF, PsbH, PsbI, PsbJ, PsbK, PsbL, PsbM, PsbT, PsbX, PsbY, PsbZ, Psb30/Ycf12, peripheral proteins PsbO, CyanoQ (PsbQ), PsbU, PsbV and a large number of cofactors. It forms dimeric complexes.

It localises to the cellular thylakoid membrane. In terms of biological role, may control the interaction of photosystem II (PSII) cores with the light-harvesting antenna, regulates electron flow through the 2 photosystem reaction centers. PSII is a light-driven water plastoquinone oxidoreductase, using light energy to abstract electrons from H(2)O, generating a proton gradient subsequently used for ATP formation. The protein is Photosystem II reaction center protein Z of Nostoc sp. (strain PCC 7120 / SAG 25.82 / UTEX 2576).